The sequence spans 239 residues: Ubiquinone biosynthesis O-methyltransferase (239 aa).

Residues arginine 44, glycine 63, aspartate 84, and methionine 128 each contribute to the S-adenosyl-L-methionine site.

The protein belongs to the methyltransferase superfamily. UbiG/COQ3 family.

It carries out the reaction a 3-demethylubiquinol + S-adenosyl-L-methionine = a ubiquinol + S-adenosyl-L-homocysteine + H(+). The enzyme catalyses a 3-(all-trans-polyprenyl)benzene-1,2-diol + S-adenosyl-L-methionine = a 2-methoxy-6-(all-trans-polyprenyl)phenol + S-adenosyl-L-homocysteine + H(+). It functions in the pathway cofactor biosynthesis; ubiquinone biosynthesis. O-methyltransferase that catalyzes the 2 O-methylation steps in the ubiquinone biosynthetic pathway. The polypeptide is Ubiquinone biosynthesis O-methyltransferase (Xanthomonas euvesicatoria pv. vesicatoria (strain 85-10) (Xanthomonas campestris pv. vesicatoria)).